The primary structure comprises 73 residues: Toxin Td12 (73 aa).

The signal sequence occupies residues Ile1–Cys7. The LCN-type CS-alpha/beta domain occupies Lys8–Gly70. Cystine bridges form between Cys18–Cys69, Cys22–Cys44, Cys30–Cys50, and Cys34–Cys52. Residue Arg71 is modified to Arginine amide.

The protein belongs to the long (4 C-C) scorpion toxin superfamily. Sodium channel inhibitor family. Beta subfamily. In terms of tissue distribution, expressed by the venom gland.

It localises to the secreted. Beta toxins bind voltage-independently at site-4 of sodium channels (Nav) and shift the voltage of activation toward more negative potentials thereby affecting sodium channel activation and promoting spontaneous and repetitive firing. The polypeptide is Toxin Td12 (Tityus discrepans (Venezuelan scorpion)).